The primary structure comprises 175 residues: FMRFamide-like neuropeptides 1 (175 aa).

Residues 1–21 (MTLLYQVGLLLLVAATYKVSA) form the signal peptide. Residues 22-68 (ECCTPGATSDFCTVFSMLSTMEQNEVMNFIGENCDGDAEVALQKMEK) constitute a propeptide that is removed on maturation. At tyrosine 76 the chain carries Tyrosine amide. The propeptide occupies 79–86 (SAAVKSLG). Phenylalanine amide is present on residues phenylalanine 98, phenylalanine 108, phenylalanine 120, phenylalanine 130, phenylalanine 142, and phenylalanine 154. A propeptide spanning residues 157–165 (SFDNFDRES) is cleaved from the precursor. Position 173 is a phenylalanine amide (phenylalanine 173).

This sequence belongs to the FARP (FMRFamide related peptide) family. May be processed by convertase egl-3. In terms of tissue distribution, each flp gene is expressed in a distinct set of neurons. Flp-1 is expressed in the AVA interneurons, the M5 cholinergic pharyngeal motoneurons, and the AIA, AIY, AVE, AVK, RIG and RMG neurons.

The protein resides in the secreted. Together with flp-18, plays a homeostatic role by acting on the GABAergic neural transmission at neuromuscular junctions to prevent overexcitation of the locomotor circuit. Its function is as follows. Inhibits the activity of dissected pharyngeal myogenic muscle system. In terms of biological role, DPNFLRF-amide: Inhibits the activity of dissected pharyngeal myogenic muscle system. Functionally, acts as a ligand for the npr-22 receptor in vitro. The protein is FMRFamide-like neuropeptides 1 (flp-1) of Caenorhabditis elegans.